The sequence spans 136 residues: Small ribosomal subunit protein uS9 (136 aa).

The interval 97-136 (SPDNRKPLKTEGHLSRDPRAKERRKYGLKKARKAPQFSKR) is disordered. Residues 98–116 (PDNRKPLKTEGHLSRDPRA) are compositionally biased toward basic and acidic residues. Positions 117–136 (KERRKYGLKKARKAPQFSKR) are enriched in basic residues.

This sequence belongs to the universal ribosomal protein uS9 family.

This Prochlorococcus marinus (strain MIT 9215) protein is Small ribosomal subunit protein uS9.